We begin with the raw amino-acid sequence, 191 residues long: GTP cyclohydrolase 1 (191 aa).

Positions 80, 83, and 151 each coordinate Zn(2+).

This sequence belongs to the GTP cyclohydrolase I family. In terms of assembly, toroid-shaped homodecamer, composed of two pentamers of five dimers.

It carries out the reaction GTP + H2O = 7,8-dihydroneopterin 3'-triphosphate + formate + H(+). It functions in the pathway cofactor biosynthesis; 7,8-dihydroneopterin triphosphate biosynthesis; 7,8-dihydroneopterin triphosphate from GTP: step 1/1. The chain is GTP cyclohydrolase 1 from Nitrosospira multiformis (strain ATCC 25196 / NCIMB 11849 / C 71).